The following is a 336-amino-acid chain: Dihydroorotate dehydrogenase (quinone) (336 aa).

FMN-binding positions include 62–66 (AGLDK) and threonine 86. Lysine 66 is a substrate binding site. 111 to 115 (NRMGF) is a binding site for substrate. FMN-binding residues include asparagine 139 and asparagine 172. Asparagine 172 is a binding site for substrate. Serine 175 functions as the Nucleophile in the catalytic mechanism. A substrate-binding site is contributed by asparagine 177. FMN-binding residues include lysine 217 and threonine 245. 246–247 (NT) contributes to the substrate binding site. FMN-binding positions include glycine 268, glycine 297, and 318–319 (YS).

Belongs to the dihydroorotate dehydrogenase family. Type 2 subfamily. As to quaternary structure, monomer. FMN serves as cofactor.

It localises to the cell membrane. The enzyme catalyses (S)-dihydroorotate + a quinone = orotate + a quinol. Its pathway is pyrimidine metabolism; UMP biosynthesis via de novo pathway; orotate from (S)-dihydroorotate (quinone route): step 1/1. Catalyzes the conversion of dihydroorotate to orotate with quinone as electron acceptor. This chain is Dihydroorotate dehydrogenase (quinone), found in Enterobacter sp. (strain 638).